Consider the following 444-residue polypeptide: Phosphoglucosamine mutase (444 aa).

S99 functions as the Phosphoserine intermediate in the catalytic mechanism. Mg(2+)-binding residues include S99, D242, D244, and D246. S99 bears the Phosphoserine mark.

This sequence belongs to the phosphohexose mutase family. Requires Mg(2+) as cofactor. Activated by phosphorylation.

It carries out the reaction alpha-D-glucosamine 1-phosphate = D-glucosamine 6-phosphate. Its function is as follows. Catalyzes the conversion of glucosamine-6-phosphate to glucosamine-1-phosphate. This Aliarcobacter butzleri (strain RM4018) (Arcobacter butzleri) protein is Phosphoglucosamine mutase.